A 631-amino-acid chain; its full sequence is Phosphomethylpyrimidine synthase (631 aa).

Residues N239, M268, Y297, H333, S353 to G355, D394 to R397, and E433 contribute to the substrate site. Position 437 (H437) interacts with Zn(2+). Y460 is a substrate binding site. H501 provides a ligand contact to Zn(2+). The [4Fe-4S] cluster site is built by C581, C584, and C589.

Belongs to the ThiC family. Homodimer. It depends on [4Fe-4S] cluster as a cofactor.

It carries out the reaction 5-amino-1-(5-phospho-beta-D-ribosyl)imidazole + S-adenosyl-L-methionine = 4-amino-2-methyl-5-(phosphooxymethyl)pyrimidine + CO + 5'-deoxyadenosine + formate + L-methionine + 3 H(+). It functions in the pathway cofactor biosynthesis; thiamine diphosphate biosynthesis. Functionally, catalyzes the synthesis of the hydroxymethylpyrimidine phosphate (HMP-P) moiety of thiamine from aminoimidazole ribotide (AIR) in a radical S-adenosyl-L-methionine (SAM)-dependent reaction. This is Phosphomethylpyrimidine synthase from Escherichia coli (strain SMS-3-5 / SECEC).